The primary structure comprises 322 residues: Probable arabinan endo-1,5-alpha-L-arabinosidase A (322 aa).

The signal sequence occupies residues 1 to 19 (MYLPTLAASASLLVGVAHG). The Proton acceptor role is filled by Asp-34. Glu-201 serves as the catalytic Proton donor.

This sequence belongs to the glycosyl hydrolase 43 family.

The protein localises to the secreted. The catalysed reaction is Endohydrolysis of (1-&gt;5)-alpha-arabinofuranosidic linkages in (1-&gt;5)-arabinans.. The protein operates within glycan metabolism; L-arabinan degradation. Endo-1,5-alpha-L-arabinanase involved in degradation of pectin. Its preferred substrate is linear 1,5-alpha-L-arabinan. The protein is Probable arabinan endo-1,5-alpha-L-arabinosidase A (abnA) of Emericella nidulans (strain FGSC A4 / ATCC 38163 / CBS 112.46 / NRRL 194 / M139) (Aspergillus nidulans).